The sequence spans 182 residues: uncharacterized protein (182 aa).

This is an uncharacterized protein from Acanthamoeba polyphaga mimivirus (APMV).